Consider the following 98-residue polypeptide: Large ribosomal subunit protein uL23 (98 aa).

This sequence belongs to the universal ribosomal protein uL23 family. As to quaternary structure, part of the 50S ribosomal subunit. Contacts protein L29, and trigger factor when it is bound to the ribosome.

Functionally, one of the early assembly proteins it binds 23S rRNA. One of the proteins that surrounds the polypeptide exit tunnel on the outside of the ribosome. Forms the main docking site for trigger factor binding to the ribosome. This Cereibacter sphaeroides (strain ATCC 17025 / ATH 2.4.3) (Rhodobacter sphaeroides) protein is Large ribosomal subunit protein uL23.